The following is a 545-amino-acid chain: CTP synthase (545 aa).

Residues 1 to 265 (MTKYIFITGG…DEIVVKKLSL (265 aa)) form an amidoligase domain region. Ser-13 serves as a coordination point for CTP. Ser-13 contributes to the UTP binding site. ATP contacts are provided by residues 14–19 (SLGKGI) and Asp-71. Mg(2+)-binding residues include Asp-71 and Glu-139. CTP-binding positions include 146–148 (DIE), 186–191 (KTKPTQ), and Lys-222. UTP-binding positions include 186–191 (KTKPTQ) and Lys-222. Residues 290–541 (KIAMVGKYTE…VFAARIHHQE (252 aa)) enclose the Glutamine amidotransferase type-1 domain. Residue Gly-351 participates in L-glutamine binding. The active-site Nucleophile; for glutamine hydrolysis is Cys-378. Residues 379–382 (LGMQ), Glu-402, and Arg-469 contribute to the L-glutamine site. Residues His-514 and Glu-516 contribute to the active site.

This sequence belongs to the CTP synthase family. Homotetramer.

It carries out the reaction UTP + L-glutamine + ATP + H2O = CTP + L-glutamate + ADP + phosphate + 2 H(+). The catalysed reaction is L-glutamine + H2O = L-glutamate + NH4(+). The enzyme catalyses UTP + NH4(+) + ATP = CTP + ADP + phosphate + 2 H(+). Its pathway is pyrimidine metabolism; CTP biosynthesis via de novo pathway; CTP from UDP: step 2/2. Its activity is regulated as follows. Allosterically activated by GTP, when glutamine is the substrate; GTP has no effect on the reaction when ammonia is the substrate. The allosteric effector GTP functions by stabilizing the protein conformation that binds the tetrahedral intermediate(s) formed during glutamine hydrolysis. Inhibited by the product CTP, via allosteric rather than competitive inhibition. Catalyzes the ATP-dependent amination of UTP to CTP with either L-glutamine or ammonia as the source of nitrogen. Regulates intracellular CTP levels through interactions with the four ribonucleotide triphosphates. The sequence is that of CTP synthase from Legionella pneumophila (strain Lens).